The primary structure comprises 577 residues: Zinc finger-containing ubiquitin peptidase 1 (577 aa).

The C2H2-type 1 zinc-finger motif lies at 2 to 24; sequence LSCNICGETVNSEPDMKAHLIVH. The segment at 29–52 adopts a C2H2-type 2; atypical zinc-finger fold; sequence IICPFCKLSGINYNEICFHIETVH. Residues 124–137 show a composition bias toward basic and acidic residues; that stretch reads ESRKYQKSREKKPG. A disordered region spans residues 124–145; that stretch reads ESRKYQKSREKKPGLSEAQGSI. The C2H2-type 3; atypical zinc finger occupies 153-176; the sequence is PECPFCGKIEGCSQDMEIHVKTKH. The segment at 192–214 adopts a C2H2-type 4 zinc-finger fold; the sequence is YDCPMCGLVCTNYHILQEHVDLH. The MIU stretch occupies residues 225-247; it reads DRVQCSSDRELAHRLQQEEDRKR. The interval 238-260 is disordered; sequence RLQQEEDRKRKSEESRQEREEFQ. Residues 248-273 are zUBD/ZHA; sequence KSEESRQEREEFQKLQRQYGLDNSGG. Lys261 carries the N6-acetyllysine modification. The active-site Nucleophile is Cys359. Catalysis depends on His490, which acts as the Proton acceptor. The active site involves Asp511.

The protein belongs to the peptidase C78 family. ZUFSP subfamily. As to quaternary structure, interacts with RPA1 and RPA2.

Its subcellular location is the cytoplasm. The protein localises to the nucleus. It catalyses the reaction Thiol-dependent hydrolysis of ester, thioester, amide, peptide and isopeptide bonds formed by the C-terminal Gly of ubiquitin (a 76-residue protein attached to proteins as an intracellular targeting signal).. Deubiquitinase with endodeubiquitinase activity that specifically interacts with and cleaves 'Lys-63'-linked long polyubiquitin chains. Shows only weak activity against 'Lys-11' and 'Lys-48'-linked chains. Plays an important role in genome stability pathways, functioning to prevent spontaneous DNA damage and also promote cellular survival in response to exogenous DNA damage. Modulates the ubiquitination status of replication protein A (RPA) complex proteins in response to replication stress. The polypeptide is Zinc finger-containing ubiquitin peptidase 1 (Mus musculus (Mouse)).